The primary structure comprises 89 residues: Putative regulatory protein CLL_A1210 (89 aa).

It belongs to the RemA family.

The sequence is that of Putative regulatory protein CLL_A1210 from Clostridium botulinum (strain Eklund 17B / Type B).